The primary structure comprises 614 residues: Replication protein A 70 kDa DNA-binding subunit (614 aa).

Residues 112 to 178 (GNPVPYNEGQ…SSVKTPGGTQ (67 aa)) are disordered. Composition is skewed to polar residues over residues 120 to 130 (GQGQQRSSAPT) and 158 to 178 (PSNQFSKASAPSSVKTPGGTQ). A DNA-binding region (OB) is located at residues 194–278 (WTICARVTQK…VKNDYEITFN (85 aa)). The C4-type zinc-finger motif lies at 478 to 500 (CPSQDCNKKVIDQQNGLYRCEKC).

This sequence belongs to the replication factor A protein 1 family. As to quaternary structure, component of the heterotrimeric canonical replication protein A complex (RPA).

The protein resides in the nucleus. It localises to the PML body. As part of the heterotrimeric replication protein A complex (RPA/RP-A), binds and stabilizes single-stranded DNA intermediates, that form during DNA replication or upon DNA stress. It prevents their reannealing and in parallel, recruits and activates different proteins and complexes involved in DNA metabolism. Thereby, it plays an essential role both in DNA replication and the cellular response to DNA damage. The sequence is that of Replication protein A 70 kDa DNA-binding subunit (RPA1) from Gallus gallus (Chicken).